We begin with the raw amino-acid sequence, 119 residues long: Integration host factor subunit alpha (119 aa).

The disordered stretch occupies residues I96–E119.

The protein belongs to the bacterial histone-like protein family. Heterodimer of an alpha and a beta chain.

Its function is as follows. This protein is one of the two subunits of integration host factor, a specific DNA-binding protein that functions in genetic recombination as well as in transcriptional and translational control. The polypeptide is Integration host factor subunit alpha (Bradyrhizobium sp. (strain ORS 278)).